Consider the following 88-residue polypeptide: Small ribosomal subunit protein uS15 (88 aa).

Belongs to the universal ribosomal protein uS15 family. As to quaternary structure, part of the 30S ribosomal subunit. Forms a bridge to the 50S subunit in the 70S ribosome, contacting the 23S rRNA.

In terms of biological role, one of the primary rRNA binding proteins, it binds directly to 16S rRNA where it helps nucleate assembly of the platform of the 30S subunit by binding and bridging several RNA helices of the 16S rRNA. Its function is as follows. Forms an intersubunit bridge (bridge B4) with the 23S rRNA of the 50S subunit in the ribosome. The protein is Small ribosomal subunit protein uS15 of Albidiferax ferrireducens (strain ATCC BAA-621 / DSM 15236 / T118) (Rhodoferax ferrireducens).